A 1107-amino-acid chain; its full sequence is Voltage-gated delayed rectifier potassium channel KCNH8 (1107 aa).

Over methionine 1 to aspartate 225 the chain is Cytoplasmic. Residues isoleucine 18–lysine 90 form the PAS domain. In terms of domain architecture, PAC spans phenylalanine 93–lysine 145. Residues tryptophan 226–isoleucine 246 form a helical membrane-spanning segment. Residues glycine 247–arginine 255 are Extracellular-facing. A helical transmembrane segment spans residues serine 256–phenylalanine 276. Topologically, residues arginine 277–tyrosine 298 are cytoplasmic. Residues valine 299–phenylalanine 319 traverse the membrane as a helical segment. The N-linked (GlcNAc...) asparagine glycan is linked to asparagine 320. The Extracellular segment spans residues asparagine 320 to valine 327. Residues histidine 328 to tyrosine 348 traverse the membrane as a helical; Voltage-sensor segment. Over serine 349–threonine 357 the chain is Cytoplasmic. A helical transmembrane segment spans residues leucine 358 to glycine 378. Over lysine 379 to serine 419 the chain is Extracellular. An N-linked (GlcNAc...) asparagine glycan is attached at asparagine 409. An intramembrane region (pore-forming) is located at residues alanine 420–valine 440. Residues serine 434–asparagine 439 carry the Selectivity filter motif. Residues serine 441–lysine 448 lie on the Extracellular side of the membrane. The helical transmembrane segment at isoleucine 449 to valine 469 threads the bilayer. At threonine 470 to valine 1107 the chain is on the cytoplasmic side. Positions leucine 551–aspartate 668 are cNMP-binding domain. The span at serine 686–isoleucine 702 shows a compositional bias: polar residues. 4 disordered regions span residues serine 686–valine 742, histidine 764–glutamate 791, glutamate 818–glycine 847, and valine 961–proline 989. The segment covering valine 710–alanine 724 has biased composition (acidic residues). Positions valine 961–arginine 972 are enriched in polar residues.

Belongs to the potassium channel family. H (Eag) (TC 1.A.1.20) subfamily. Kv12.1/KCNH8 sub-subfamily. The potassium channel is probably composed of a homo- or heterotetrameric complex of pore-forming alpha subunits that can associate with modulating beta subunits. In terms of tissue distribution, primarily expressed in the nervous system.

The protein resides in the membrane. It catalyses the reaction K(+)(in) = K(+)(out). Its function is as follows. Pore-forming (alpha) subunit of a voltage-gated delayed rectifier potassium channel that mediates outward-rectifying potassium currents. Elicits a slowly activating, non-inactivating and slowly deactivation outwards potassium current at depolarizating voltages from -30 mV to +50mV. Shows no obvious change in the activation rate from different holding potentials. Activation is strongly dependent on the pH of the external solution. The sequence is that of Voltage-gated delayed rectifier potassium channel KCNH8 from Homo sapiens (Human).